The chain runs to 73 residues: Translation initiation factor IF-1 (73 aa).

In terms of domain architecture, S1-like spans 1 to 72 (MAKEDAIEVE…NRGRITYRSK (72 aa)).

The protein belongs to the IF-1 family. Component of the 30S ribosomal translation pre-initiation complex which assembles on the 30S ribosome in the order IF-2 and IF-3, IF-1 and N-formylmethionyl-tRNA(fMet); mRNA recruitment can occur at any time during PIC assembly.

The protein localises to the cytoplasm. In terms of biological role, one of the essential components for the initiation of protein synthesis. Stabilizes the binding of IF-2 and IF-3 on the 30S subunit to which N-formylmethionyl-tRNA(fMet) subsequently binds. Helps modulate mRNA selection, yielding the 30S pre-initiation complex (PIC). Upon addition of the 50S ribosomal subunit IF-1, IF-2 and IF-3 are released leaving the mature 70S translation initiation complex. This chain is Translation initiation factor IF-1, found in Syntrophobacter fumaroxidans (strain DSM 10017 / MPOB).